A 124-amino-acid polypeptide reads, in one-letter code: Holo-[acyl-carrier-protein] synthase (124 aa).

Mg(2+)-binding residues include Asp7 and Glu55.

This sequence belongs to the P-Pant transferase superfamily. AcpS family. The cofactor is Mg(2+).

The protein localises to the cytoplasm. The enzyme catalyses apo-[ACP] + CoA = holo-[ACP] + adenosine 3',5'-bisphosphate + H(+). Functionally, transfers the 4'-phosphopantetheine moiety from coenzyme A to a Ser of acyl-carrier-protein. In Borreliella burgdorferi (strain ATCC 35210 / DSM 4680 / CIP 102532 / B31) (Borrelia burgdorferi), this protein is Holo-[acyl-carrier-protein] synthase.